The sequence spans 440 residues: Xylose isomerase (440 aa).

Active-site residues include histidine 101 and aspartate 104. Mg(2+)-binding residues include glutamate 232, glutamate 268, histidine 271, aspartate 296, aspartate 307, aspartate 309, and aspartate 339.

This sequence belongs to the xylose isomerase family. As to quaternary structure, homotetramer. Mg(2+) serves as cofactor.

It is found in the cytoplasm. It carries out the reaction alpha-D-xylose = alpha-D-xylulofuranose. This Salmonella paratyphi B (strain ATCC BAA-1250 / SPB7) protein is Xylose isomerase.